A 395-amino-acid polypeptide reads, in one-letter code: S-adenosylmethionine synthase (395 aa).

H16 contributes to the ATP binding site. D18 serves as a coordination point for Mg(2+). Position 44 (E44) interacts with K(+). L-methionine is bound by residues E57 and Q100. Positions 100–110 (QSPDIAGGVNL) are flexible loop. Residues 175-177 (DGK), 242-243 (RF), D251, 257-258 (RK), A274, and K278 each bind ATP. Position 251 (D251) interacts with L-methionine. Residue K282 coordinates L-methionine.

This sequence belongs to the AdoMet synthase family. In terms of assembly, homotetramer; dimer of dimers. Requires Mg(2+) as cofactor. K(+) serves as cofactor.

It localises to the cytoplasm. It catalyses the reaction L-methionine + ATP + H2O = S-adenosyl-L-methionine + phosphate + diphosphate. It participates in amino-acid biosynthesis; S-adenosyl-L-methionine biosynthesis; S-adenosyl-L-methionine from L-methionine: step 1/1. Functionally, catalyzes the formation of S-adenosylmethionine (AdoMet) from methionine and ATP. The overall synthetic reaction is composed of two sequential steps, AdoMet formation and the subsequent tripolyphosphate hydrolysis which occurs prior to release of AdoMet from the enzyme. This chain is S-adenosylmethionine synthase, found in Thermus thermophilus (strain ATCC BAA-163 / DSM 7039 / HB27).